Here is a 35-residue protein sequence, read N- to C-terminus: uncharacterized protein (35 aa).

This is an uncharacterized protein from Bacillus subtilis (strain 168).